The chain runs to 84 residues: uncharacterized protein (84 aa).

Transmembrane regions (helical) follow at residues 27–47 (INHH…LAML) and 52–72 (IGHV…FVLI).

It to M.tuberculosis Rv2876.

The protein resides in the cell membrane. This is an uncharacterized protein from Mycobacterium leprae (strain TN).